The following is a 254-amino-acid chain: MTPQRIGFVASPAPVAQEALVAMEARYGQCPLPEAEVIVALGGDGFMLQTLHETQSLDIPVYGMNRGTVGFLMNGYAGDGLRERLAEAEEEILNPLVMTAVTEAGEVFHRIAINEVSLLRAGPQAAWLKISVDGKVRMEELVCDGALVCTPAGSTAYNYSAHGPILPIGADVLALTAIAPFRPRRWRGALLPKTATVRFDVIDARKRPVMADADGRSVRDVVSVEVRSEPAIRHRLLFDPGHGLEERLIREQFV.

Asp-44 serves as the catalytic Proton acceptor. NAD(+)-binding positions include 44–45 (DG), 114–115 (NE), Asp-144, Ala-152, 155–160 (TAYNYS), and Ala-179.

This sequence belongs to the NAD kinase family. A divalent metal cation serves as cofactor.

The protein localises to the cytoplasm. The catalysed reaction is NAD(+) + ATP = ADP + NADP(+) + H(+). Functionally, involved in the regulation of the intracellular balance of NAD and NADP, and is a key enzyme in the biosynthesis of NADP. Catalyzes specifically the phosphorylation on 2'-hydroxyl of the adenosine moiety of NAD to yield NADP. This chain is NAD kinase, found in Cereibacter sphaeroides (strain ATCC 17025 / ATH 2.4.3) (Rhodobacter sphaeroides).